The chain runs to 432 residues: Glutamate-1-semialdehyde 2,1-aminomutase (432 aa).

The residue at position 272 (K272) is an N6-(pyridoxal phosphate)lysine.

It belongs to the class-III pyridoxal-phosphate-dependent aminotransferase family. HemL subfamily. In terms of assembly, homodimer. Pyridoxal 5'-phosphate serves as cofactor.

It is found in the cytoplasm. The enzyme catalyses (S)-4-amino-5-oxopentanoate = 5-aminolevulinate. It functions in the pathway porphyrin-containing compound metabolism; protoporphyrin-IX biosynthesis; 5-aminolevulinate from L-glutamyl-tRNA(Glu): step 2/2. It participates in porphyrin-containing compound metabolism; chlorophyll biosynthesis. This is Glutamate-1-semialdehyde 2,1-aminomutase from Trichodesmium erythraeum (strain IMS101).